The primary structure comprises 342 residues: N-acetyl-gamma-glutamyl-phosphate reductase (342 aa).

Cysteine 147 is an active-site residue.

This sequence belongs to the NAGSA dehydrogenase family. Type 1 subfamily.

The protein resides in the cytoplasm. It carries out the reaction N-acetyl-L-glutamate 5-semialdehyde + phosphate + NADP(+) = N-acetyl-L-glutamyl 5-phosphate + NADPH + H(+). Its pathway is amino-acid biosynthesis; L-arginine biosynthesis; N(2)-acetyl-L-ornithine from L-glutamate: step 3/4. Its function is as follows. Catalyzes the NADPH-dependent reduction of N-acetyl-5-glutamyl phosphate to yield N-acetyl-L-glutamate 5-semialdehyde. In Methanosphaera stadtmanae (strain ATCC 43021 / DSM 3091 / JCM 11832 / MCB-3), this protein is N-acetyl-gamma-glutamyl-phosphate reductase.